The primary structure comprises 491 residues: Trehalose-6-phosphate synthase (491 aa).

R22 is a D-glucose 6-phosphate binding site. 42 to 43 (GG) provides a ligand contact to UDP-alpha-D-glucose. Positions 100 and 154 each coordinate D-glucose 6-phosphate. UDP-alpha-D-glucose contacts are provided by R296 and K301. Position 334 (R334) interacts with D-glucose 6-phosphate. 399-403 (LVAKE) contributes to the UDP-alpha-D-glucose binding site.

Belongs to the glycosyltransferase 20 family. In terms of assembly, homotetramer.

The enzyme catalyses ADP-alpha-D-glucose + D-glucose 6-phosphate = alpha,alpha-trehalose 6-phosphate + ADP + H(+). It catalyses the reaction CDP-alpha-D-glucose + D-glucose 6-phosphate = alpha,alpha-trehalose 6-phosphate + CDP + H(+). It carries out the reaction GDP-alpha-D-glucose + D-glucose 6-phosphate = alpha,alpha-trehalose 6-phosphate + GDP + H(+). The catalysed reaction is TDP-alpha-D-glucose + D-glucose 6-phosphate = 5-methyl-UDP + alpha,alpha-trehalose 6-phosphate + H(+). The enzyme catalyses D-glucose 6-phosphate + UDP-alpha-D-glucose = alpha,alpha-trehalose 6-phosphate + UDP + H(+). The protein operates within glycan biosynthesis; trehalose biosynthesis. Probably involved in the osmoprotection via the biosynthesis of trehalose and in the production of glycogen and alpha-glucan via the TreS-Pep2 branch involved in the biosynthesis of maltose-1-phosphate (M1P). Catalyzes the transfer of glucose from UDP-glucose (UDP-Glc) to D-glucose 6-phosphate (Glc-6-P) to form trehalose-6-phosphate. Probably also able to use ADP-Glc, CDP-Glc, GDP-Glc and TDP-Glc as glucosyl donors. This Mycolicibacterium vanbaalenii (strain DSM 7251 / JCM 13017 / BCRC 16820 / KCTC 9966 / NRRL B-24157 / PYR-1) (Mycobacterium vanbaalenii) protein is Trehalose-6-phosphate synthase.